The chain runs to 194 residues: Phosphoheptose isomerase (194 aa).

The SIS domain occupies 37–194; that stretch reads ISNSFKQGGK…LIEFEMAKQA (158 aa). Substrate is bound at residue 52–54; it reads NGG. His61 and Glu65 together coordinate Zn(2+). Residues Glu65, 93–94, 119–121, Ser124, and Gln172 each bind substrate; these read ND and STS. Gln172 and His180 together coordinate Zn(2+).

The protein belongs to the SIS family. GmhA subfamily. As to quaternary structure, homotetramer. Zn(2+) is required as a cofactor.

The protein resides in the cytoplasm. The enzyme catalyses 2 D-sedoheptulose 7-phosphate = D-glycero-alpha-D-manno-heptose 7-phosphate + D-glycero-beta-D-manno-heptose 7-phosphate. It participates in carbohydrate biosynthesis; D-glycero-D-manno-heptose 7-phosphate biosynthesis; D-glycero-alpha-D-manno-heptose 7-phosphate and D-glycero-beta-D-manno-heptose 7-phosphate from sedoheptulose 7-phosphate: step 1/1. Catalyzes the isomerization of sedoheptulose 7-phosphate in D-glycero-D-manno-heptose 7-phosphate. The polypeptide is Phosphoheptose isomerase (Actinobacillus pleuropneumoniae serotype 5b (strain L20)).